We begin with the raw amino-acid sequence, 1594 residues long: Protein SHORTAGE IN CHIASMATA 1 (1594 aa).

Disordered regions lie at residues 1148–1180 (DSRSVMTDSSSSVSSGPDSDTHHVSVHSGSKKK), 1239–1283 (APFK…QPDF), 1396–1426 (AADIDSSSERYATEKDSKYDNNTSLRGYADN), 1491–1523 (RSRARKQQQSLPSYASPPSLETPGNIKKANTKR), and 1536–1594 (GGNK…LVWK). A compositionally biased stretch (low complexity) spans 1151–1165 (SVMTDSSSSVSSGPD). 2 stretches are compositionally biased toward basic and acidic residues: residues 1254–1265 (PSKDPERFDKKS) and 1402–1414 (SSERYATEKDSKY). The segment covering 1577–1594 (QSLSYTANGTGQTKLVWK) has biased composition (polar residues).

Belongs to the XPF family. Interacts with PTD. As to expression, highest levels in young buds, where male meiosis occurs. Also present at low levels in plantlets, leaves, flowers, and roots.

The protein localises to the nucleus. Its function is as follows. Essential for the formation of class I meiotic crossovers. This is Protein SHORTAGE IN CHIASMATA 1 from Arabidopsis thaliana (Mouse-ear cress).